Consider the following 270-residue polypeptide: 3-phenylpropionate-dihydrodiol/cinnamic acid-dihydrodiol dehydrogenase (270 aa).

10 to 34 (FITGGGSGLGLALVERFIEEGAQVA) is an NAD(+) binding site. Ser143 is a substrate binding site. Tyr156 functions as the Proton acceptor in the catalytic mechanism.

Belongs to the short-chain dehydrogenases/reductases (SDR) family.

The catalysed reaction is 3-(cis-5,6-dihydroxycyclohexa-1,3-dien-1-yl)propanoate + NAD(+) = 3-(2,3-dihydroxyphenyl)propanoate + NADH + H(+). It carries out the reaction (2E)-3-(cis-5,6-dihydroxycyclohexa-1,3-dien-1-yl)prop-2-enoate + NAD(+) = (2E)-3-(2,3-dihydroxyphenyl)prop-2-enoate + NADH + H(+). It functions in the pathway aromatic compound metabolism; 3-phenylpropanoate degradation. In terms of biological role, converts 3-phenylpropionate-dihydrodiol (PP-dihydrodiol) and cinnamic acid-dihydrodiol (CI-dihydrodiol) into 3-(2,3-dihydroxylphenyl)propanoic acid (DHPP) and 2,3-dihydroxicinnamic acid (DHCI), respectively. The sequence is that of 3-phenylpropionate-dihydrodiol/cinnamic acid-dihydrodiol dehydrogenase from Escherichia coli (strain K12 / MC4100 / BW2952).